We begin with the raw amino-acid sequence, 129 residues long: Small ribosomal subunit protein uS11 (129 aa).

This sequence belongs to the universal ribosomal protein uS11 family. In terms of assembly, part of the 30S ribosomal subunit. Interacts with proteins S7 and S18. Binds to IF-3.

Located on the platform of the 30S subunit, it bridges several disparate RNA helices of the 16S rRNA. Forms part of the Shine-Dalgarno cleft in the 70S ribosome. In Bacteroides thetaiotaomicron (strain ATCC 29148 / DSM 2079 / JCM 5827 / CCUG 10774 / NCTC 10582 / VPI-5482 / E50), this protein is Small ribosomal subunit protein uS11.